Consider the following 513-residue polypeptide: Sterol 14-alpha demethylase rstn2 (513 aa).

A helical membrane pass occupies residues 3–23 (WPLIGAYALLAFVAIIALNVT). Residue cysteine 453 coordinates heme.

The protein belongs to the cytochrome P450 family. It depends on heme as a cofactor.

The protein localises to the membrane. It catalyses the reaction a 14alpha-methyl steroid + 3 reduced [NADPH--hemoprotein reductase] + 3 O2 = a Delta(14) steroid + formate + 3 oxidized [NADPH--hemoprotein reductase] + 4 H2O + 4 H(+). It carries out the reaction a 14alpha-methyl steroid + reduced [NADPH--hemoprotein reductase] + O2 = a 14alpha-hydroxymethyl steroid + oxidized [NADPH--hemoprotein reductase] + H2O + H(+). The enzyme catalyses a 14alpha-hydroxymethyl steroid + reduced [NADPH--hemoprotein reductase] + O2 = a 14alpha-formyl steroid + oxidized [NADPH--hemoprotein reductase] + 2 H2O + H(+). The catalysed reaction is a 14alpha-formyl steroid + reduced [NADPH--hemoprotein reductase] + O2 = a Delta(14) steroid + formate + oxidized [NADPH--hemoprotein reductase] + H2O + 2 H(+). It catalyses the reaction lanosterol + 3 reduced [NADPH--hemoprotein reductase] + 3 O2 = 4,4-dimethyl-5alpha-cholesta-8,14,24-trien-3beta-ol + formate + 3 oxidized [NADPH--hemoprotein reductase] + 4 H2O + 4 H(+). It carries out the reaction lanosterol + reduced [NADPH--hemoprotein reductase] + O2 = 32-hydroxylanosterol + oxidized [NADPH--hemoprotein reductase] + H2O + H(+). The enzyme catalyses 32-hydroxylanosterol + reduced [NADPH--hemoprotein reductase] + O2 = 32-oxolanosterol + oxidized [NADPH--hemoprotein reductase] + 2 H2O + H(+). The catalysed reaction is 32-oxolanosterol + reduced [NADPH--hemoprotein reductase] + O2 = 4,4-dimethyl-5alpha-cholesta-8,14,24-trien-3beta-ol + formate + oxidized [NADPH--hemoprotein reductase] + H2O + 2 H(+). It catalyses the reaction eburicol + 3 reduced [NADPH--hemoprotein reductase] + 3 O2 = 14-demethyleburicol + formate + 3 oxidized [NADPH--hemoprotein reductase] + 4 H2O + 4 H(+). It carries out the reaction eburicol + reduced [NADPH--hemoprotein reductase] + O2 = 32-hydroxyeburicol + oxidized [NADPH--hemoprotein reductase] + H2O + H(+). The enzyme catalyses 32-hydroxyeburicol + reduced [NADPH--hemoprotein reductase] + O2 = 32-oxoeburicol + oxidized [NADPH--hemoprotein reductase] + 2 H2O + H(+). The catalysed reaction is 32-oxoeburicol + reduced [NADPH--hemoprotein reductase] + O2 = 14-demethyleburicol + formate + oxidized [NADPH--hemoprotein reductase] + H2O + 2 H(+). It participates in steroid biosynthesis; sterol biosynthesis. Sterol 14-alpha demethylase; part of the gene cluster that mediates the biosynthesis of the tetrahydropyranyl antifungal agent restricticin that acts as an inhibitor of CYP51 and blocks the ergosterol biosynthesis. Sterol 14-alpha-demethylase plays a critical role in the biosynthesis of ergosterol, the major sterol component in fungal membranes that participates in a variety of functions. Rtsn2 acts as a self-resistant CYP51 that contains mutations found in CYP51s isolated from azole resistance strains and that is not inhibited by the final product of the cluster, restricticin. The protein is Sterol 14-alpha demethylase rstn2 of Aspergillus nomiae NRRL (strain ATCC 15546 / NRRL 13137 / CBS 260.88 / M93).